The chain runs to 465 residues: Adenosylhomocysteinase (465 aa).

Positions 56, 131, and 191 each coordinate substrate. 192 to 194 (TTT) is a binding site for NAD(+). Lys-221 and Asp-225 together coordinate substrate. Residues Asn-226, 255-260 (GYGNVG), Glu-278, Asn-313, 334-336 (IGH), and Asn-379 each bind NAD(+).

This sequence belongs to the adenosylhomocysteinase family. NAD(+) serves as cofactor.

The protein localises to the cytoplasm. The enzyme catalyses S-adenosyl-L-homocysteine + H2O = L-homocysteine + adenosine. It functions in the pathway amino-acid biosynthesis; L-homocysteine biosynthesis; L-homocysteine from S-adenosyl-L-homocysteine: step 1/1. Its function is as follows. May play a key role in the regulation of the intracellular concentration of adenosylhomocysteine. The protein is Adenosylhomocysteinase of Bartonella quintana (strain Toulouse) (Rochalimaea quintana).